A 567-amino-acid chain; its full sequence is Probable serine/threonine-protein kinase WNK6 (567 aa).

Positions 28–285 (IRYKEVIGKG…AKELLLDPFL (258 aa)) constitute a Protein kinase domain. ATP contacts are provided by residues 108-111 (TELF) and lysine 158. The active-site Proton acceptor is the aspartate 175. The span at 499 to 509 (VDATKGEDKSS) shows a compositional bias: basic and acidic residues. Positions 499 to 528 (VDATKGEDKSSIQEVEEATEPVSLEEEERL) are disordered. Residues 512-525 (EVEEATEPVSLEEE) are compositionally biased toward acidic residues. Positions 519–553 (PVSLEEEERLRQELEEIEAKYQEDMKEIATKREEA) form a coiled coil.

This sequence belongs to the protein kinase superfamily. Ser/Thr protein kinase family. WNK subfamily.

It catalyses the reaction L-seryl-[protein] + ATP = O-phospho-L-seryl-[protein] + ADP + H(+). It carries out the reaction L-threonyl-[protein] + ATP = O-phospho-L-threonyl-[protein] + ADP + H(+). Its function is as follows. May regulate flowering time by modulating the photoperiod pathway. The protein is Probable serine/threonine-protein kinase WNK6 (WNK6) of Arabidopsis thaliana (Mouse-ear cress).